Reading from the N-terminus, the 305-residue chain is Methionyl-tRNA formyltransferase (305 aa).

Position 111–114 (111–114 (SLLP)) interacts with (6S)-5,6,7,8-tetrahydrofolate.

It belongs to the Fmt family.

It carries out the reaction L-methionyl-tRNA(fMet) + (6R)-10-formyltetrahydrofolate = N-formyl-L-methionyl-tRNA(fMet) + (6S)-5,6,7,8-tetrahydrofolate + H(+). Its function is as follows. Attaches a formyl group to the free amino group of methionyl-tRNA(fMet). The formyl group appears to play a dual role in the initiator identity of N-formylmethionyl-tRNA by promoting its recognition by IF2 and preventing the misappropriation of this tRNA by the elongation apparatus. The protein is Methionyl-tRNA formyltransferase of Helicobacter pylori (strain HPAG1).